The chain runs to 370 residues: 4-hydroxy-3-methylbut-2-en-1-yl diphosphate synthase (flavodoxin) (370 aa).

[4Fe-4S] cluster contacts are provided by cysteine 270, cysteine 273, cysteine 305, and glutamate 312.

The protein belongs to the IspG family. The cofactor is [4Fe-4S] cluster.

It catalyses the reaction (2E)-4-hydroxy-3-methylbut-2-enyl diphosphate + oxidized [flavodoxin] + H2O + 2 H(+) = 2-C-methyl-D-erythritol 2,4-cyclic diphosphate + reduced [flavodoxin]. Its pathway is isoprenoid biosynthesis; isopentenyl diphosphate biosynthesis via DXP pathway; isopentenyl diphosphate from 1-deoxy-D-xylulose 5-phosphate: step 5/6. In terms of biological role, converts 2C-methyl-D-erythritol 2,4-cyclodiphosphate (ME-2,4cPP) into 1-hydroxy-2-methyl-2-(E)-butenyl 4-diphosphate. The polypeptide is 4-hydroxy-3-methylbut-2-en-1-yl diphosphate synthase (flavodoxin) (Hahella chejuensis (strain KCTC 2396)).